Here is a 401-residue protein sequence, read N- to C-terminus: Exodeoxyribonuclease 7 large subunit (401 aa).

This sequence belongs to the XseA family. Heterooligomer composed of large and small subunits.

The protein resides in the cytoplasm. The catalysed reaction is Exonucleolytic cleavage in either 5'- to 3'- or 3'- to 5'-direction to yield nucleoside 5'-phosphates.. Functionally, bidirectionally degrades single-stranded DNA into large acid-insoluble oligonucleotides, which are then degraded further into small acid-soluble oligonucleotides. The polypeptide is Exodeoxyribonuclease 7 large subunit (Thermoanaerobacter sp. (strain X514)).